The sequence spans 376 residues: MGIKGLSKLLARYAPKSMKEGKIDQYSGRVIAIDASILVYQFISAVRDTTGATMVDEFGETTSHIIGTFYRTIKLIESGIKPIYVFDGKPPEMKDGELHKRKENAQKAQEQLDKALEEGDKEQAKKLMKRTARMTKEQSDEVKKLLQLMGIPCIEANCEAEGTCAALVKAGKCYATATEDMDALTLGSEHVVRKFSANDNKKDPIREYSLSSILEETGFTMEQFIDLCILLGCDYCETIKGVGPITAFELIQQYKSIENILQHLSDKYKVPENWKYKEARELFLHPDVADFSDYKLEWNKIDEEGIKKYLVTEKHFNEERVSKGIEKLKNVKSKKAQGRLDSFFNVKKVPLSKSEAASGVKRKKPTTKAKESRKKK.

The N-domain stretch occupies residues 1-105; it reads MGIKGLSKLL…GELHKRKENA (105 aa). D34 lines the Mg(2+) pocket. 2 residues coordinate DNA: R47 and R71. D87, E159, E161, D180, and D182 together coordinate Mg(2+). Residues 123 to 254 are I-domain; sequence QAKKLMKRTA…ITAFELIQQY (132 aa). Position 159 (E159) interacts with DNA. DNA-binding residues include G232 and D234. D234 is a Mg(2+) binding site. Residues 336–344 are interaction with PCNA; sequence AQGRLDSFF. A disordered region spans residues 354–376; the sequence is SEAASGVKRKKPTTKAKESRKKK. Basic residues predominate over residues 360–376; that stretch reads VKRKKPTTKAKESRKKK.

Belongs to the XPG/RAD2 endonuclease family. FEN1 subfamily. As to quaternary structure, interacts with PCNA. Three molecules of FEN1 bind to one PCNA trimer with each molecule binding to one PCNA monomer. PCNA stimulates the nuclease activity without altering cleavage specificity. Requires Mg(2+) as cofactor. Phosphorylated. Phosphorylation upon DNA damage induces relocalization to the nuclear plasma.

Its subcellular location is the nucleus. The protein localises to the nucleolus. It is found in the nucleoplasm. The protein resides in the mitochondrion. Its function is as follows. Structure-specific nuclease with 5'-flap endonuclease and 5'-3' exonuclease activities involved in DNA replication and repair. During DNA replication, cleaves the 5'-overhanging flap structure that is generated by displacement synthesis when DNA polymerase encounters the 5'-end of a downstream Okazaki fragment. It enters the flap from the 5'-end and then tracks to cleave the flap base, leaving a nick for ligation. Also involved in the long patch base excision repair (LP-BER) pathway, by cleaving within the apurinic/apyrimidinic (AP) site-terminated flap. Acts as a genome stabilization factor that prevents flaps from equilibrating into structures that lead to duplications and deletions. Also possesses 5'-3' exonuclease activity on nicked or gapped double-stranded DNA, and exhibits RNase H activity. Also involved in replication and repair of rDNA and in repairing mitochondrial DNA. In Entamoeba histolytica (strain ATCC 30459 / HM-1:IMSS / ABRM), this protein is Flap endonuclease 1.